Here is a 682-residue protein sequence, read N- to C-terminus: Potassium-transporting ATPase ATP-binding subunit (682 aa).

A run of 4 helical transmembrane segments spans residues 34–54 (PVMFIVWIGSLLTTCISIAMA), 62–82 (ALFSAAISGWLWVTVLFANFA), 219–239 (IALTILLIALTIVFLLATATL), and 254–274 (VLVALLVCLIPTTIGGLLSAI). The active-site 4-aspartylphosphate intermediate is the aspartate 307. ATP contacts are provided by residues aspartate 344, glutamate 348, 377–384 (FTAQSRMS), and lysine 395. Positions 518 and 522 each coordinate Mg(2+). Transmembrane regions (helical) follow at residues 588–608 (FAIIPAAFAATYPQLNALNIM), 616–636 (AILSAVIFNALIIVFLIPLAL), and 656–676 (IYGLGGLLVPFIGIKVIDLLL).

The protein belongs to the cation transport ATPase (P-type) (TC 3.A.3) family. Type IA subfamily. The system is composed of three essential subunits: KdpA, KdpB and KdpC.

The protein localises to the cell inner membrane. It carries out the reaction K(+)(out) + ATP + H2O = K(+)(in) + ADP + phosphate + H(+). In terms of biological role, part of the high-affinity ATP-driven potassium transport (or Kdp) system, which catalyzes the hydrolysis of ATP coupled with the electrogenic transport of potassium into the cytoplasm. This subunit is responsible for energy coupling to the transport system and for the release of the potassium ions to the cytoplasm. The chain is Potassium-transporting ATPase ATP-binding subunit from Escherichia coli O6:K15:H31 (strain 536 / UPEC).